Consider the following 150-residue polypeptide: Snake venom vascular endothelial growth factor toxin barietin (150 aa).

Positions 1–24 are cleaved as a signal peptide; it reads MAAYLLAVAILFCIQGWPSGTVQG. Residue Glu25 is modified to Pyrrolidone carboxylic acid (Glu). Intrachain disulfides connect Cys38–Cys80, Cys69–Cys115, and Cys73–Cys117. The tract at residues 119–150 is disordered; that stretch reads PRSGSRVNIGKHKRSPEEGEREPSSPLTPGSL. Residues 122 to 150 constitute a propeptide that is removed on maturation; sequence GSRVNIGKHKRSPEEGEREPSSPLTPGSL.

This sequence belongs to the PDGF/VEGF growth factor family. Snake venom VEGF subfamily. Homodimer; disulfide-linked. Interacts with high affinity with VEGF receptor-2 (KDR), and with a lower affinity with VEGF receptor-1 (FLT1). Does not bind VEGF receptor-3 (FLT4) and neuropilin-1 (NRP1). In terms of tissue distribution, expressed by the venom gland.

Its subcellular location is the secreted. Snake venom VEGFs that may contribute to venom dispersion and prey subjugation by inducing vascular permeability and hypotension. This protein induces an increase in capillary permeability after intradermal injection, as well as a drastic hypotensive effect after intravenous injection. The hypotension is mediated by nitric oxide (NO), which is produced by VEGF-activated endothelium NO synthase. Also induces angiogenesis in vitro, probably through VEGF receptor (KDR/VEGFR-2) signaling. The chain is Snake venom vascular endothelial growth factor toxin barietin from Bitis arietans (African puff adder).